A 427-amino-acid polypeptide reads, in one-letter code: L-glutamine:2-deoxy-scyllo-inosose aminotransferase (427 aa).

The interval 1-20 is disordered; sequence MPLQSSRLAVDNGTPVRGKP. Lys205 carries the N6-(pyridoxal phosphate)lysine modification.

This sequence belongs to the DegT/DnrJ/EryC1 family. L-glutamine:2-deoxy-scyllo-inosose/scyllo-inosose aminotransferase subfamily. It depends on pyridoxal 5'-phosphate as a cofactor.

The catalysed reaction is 2-deoxy-L-scyllo-inosose + L-glutamine = 2-deoxy-scyllo-inosamine + 2-oxoglutaramate. It carries out the reaction 3-amino-2,3-dideoxy-scyllo-inosose + L-glutamine = 2-deoxystreptamine + 2-oxoglutaramate. It participates in metabolic intermediate biosynthesis; 2-deoxystreptamine biosynthesis; 2-deoxystreptamine from D-glucose 6-phosphate: step 2/4. The protein operates within antibiotic biosynthesis; kanamycin biosynthesis. Its function is as follows. Catalyzes the PLP-dependent transamination of 2-deoxy-scyllo-inosose (2-DOI) to form 2-deoxy-scyllo-inosamine (2-DOIA) using L-glutamine as the amino donor. Also catalyzes the transamination of 3-amino-2,3-dideoxy-scyllo-inosose (keto-2-DOIA) into 2-deoxystreptamine (2-DOS). This Streptomyces kanamyceticus protein is L-glutamine:2-deoxy-scyllo-inosose aminotransferase (kanB).